The sequence spans 184 residues: Transmembrane protein 140 (184 aa).

Topologically, residues 1–12 are cytoplasmic; it reads MAISRVWRNRLS. Residues 13 to 33 form a helical membrane-spanning segment; it reads FMAIMILVAMVLSLMSYALLW. Residues 34–83 are Extracellular-facing; it reads KAGNLTDVPNLRIGFYNFCLWKEDIGSLECYNFPELGVLGIPQVGLALAR. The N-linked (GlcNAc...) asparagine glycan is linked to asparagine 37. A helical transmembrane segment spans residues 84–104; that stretch reads LGVYGALVLAVFVPLPLLLAQ. At 105–117 the chain is on the cytoplasmic side; it reads CNSDEGEWRLAVG. Residues 118 to 138 form a helical membrane-spanning segment; that stretch reads FLGASSVLLAGGLSLFLFLVW. The Extracellular portion of the chain corresponds to 139–149; the sequence is KWLRLSFLGPG. A helical membrane pass occupies residues 150–170; it reads FLSLCLAQALLIILLMAMVMF. Topologically, residues 171-184 are cytoplasmic; the sequence is PPRDKKDKNHWENC.

The protein resides in the membrane. This is Transmembrane protein 140 (Tmem140) from Rattus norvegicus (Rat).